The chain runs to 440 residues: Oligodendrocyte-myelin glycoprotein (440 aa).

Residues 1-24 (MEYQILKMSSCLFILLFLTPGILC) form the signal peptide. One can recognise an LRRNT domain in the interval 25–55 (ICPLQCTCTERHRHVDCSGRNLTTLPPGLQE). Residues asparagine 45 and asparagine 61 are each glycosylated (N-linked (GlcNAc...) asparagine). LRR repeat units lie at residues 56–78 (NIIH…TPYT), 79–100 (NLRT…LPRS), 101–121 (LWNM…DTAY), 124–145 (NLKY…KNTL), 147–168 (SLEV…MPSK), 169–189 (LHIV…TLIN), 192–213 (NLTH…SFDQ), and 216–239 (QLQE…TYLL). Asparagine 103 is a glycosylation site (N-linked (GlcNAc...) asparagine). Asparagine 152, asparagine 176, asparagine 189, asparagine 192, and asparagine 234 each carry an N-linked (GlcNAc...) asparagine glycan. Ser/Thr-rich repeat units follow at residues 229-270 (CDHK…YPTP), 271-292 (PGFT…INSL), 293-335 (SMVT…VAYP), 336-377 (EDTP…PPSP), and 378-416 (VTLS…TRPP). N-linked (GlcNAc...) asparagine glycans are attached at residues asparagine 364 and asparagine 389. A lipid anchor (GPI-anchor amidated serine) is attached at serine 417. A propeptide spans 418–440 (AASAWKVNASLLLMLNAVVMLAG) (removed in mature form). The N-linked (GlcNAc...) asparagine glycan is linked to asparagine 425.

As to quaternary structure, binds to RTN4R. In terms of processing, O-glycosylated in its Ser/Thr-rich repeat domain. As to expression, oligodendrocytes and myelin of the central nervous system.

It is found in the cell membrane. In terms of biological role, cell adhesion molecule contributing to the interactive process required for myelination in the central nervous system. In Mus musculus (Mouse), this protein is Oligodendrocyte-myelin glycoprotein (Omg).